We begin with the raw amino-acid sequence, 276 residues long: Transmembrane protein 45B (276 aa).

A run of 6 helical transmembrane segments spans residues His7–Leu27, Ile48–Val68, Leu95–Leu115, Ile147–Val167, Leu181–Gly201, and Ile213–Ala233. Residues Ser271 and Ser273 each carry the phosphoserine modification.

Belongs to the TMEM45 family.

The protein localises to the endosome membrane. It localises to the lysosome membrane. The protein resides in the golgi apparatus. Its subcellular location is the trans-Golgi network membrane. Its function is as follows. Plays a role in innate immunity. This chain is Transmembrane protein 45B (TMEM45B), found in Bos taurus (Bovine).